The following is a 448-amino-acid chain: Tryptophan--tRNA ligase (448 aa).

Residues 10–12 (TPT) and 18–19 (GN) each bind ATP. Residues 11-19 (PTGTPHLGN) carry the 'HIGH' region motif. D143 lines the L-tryptophan pocket. Residues 155-157 (GRD), L197, and 204-208 (KMSKS) each bind ATP. A 'KMSKS' region motif is present at residues 204 to 208 (KMSKS).

Belongs to the class-I aminoacyl-tRNA synthetase family. In terms of assembly, homodimer.

The protein resides in the cytoplasm. It carries out the reaction tRNA(Trp) + L-tryptophan + ATP = L-tryptophyl-tRNA(Trp) + AMP + diphosphate + H(+). Functionally, catalyzes the attachment of tryptophan to tRNA(Trp). The sequence is that of Tryptophan--tRNA ligase from Pseudomonas aeruginosa (strain ATCC 15692 / DSM 22644 / CIP 104116 / JCM 14847 / LMG 12228 / 1C / PRS 101 / PAO1).